Consider the following 2005-residue polypeptide: Sodium channel protein type 2 subunit alpha (2005 aa).

The Cytoplasmic segment spans residues 1 to 129 (MAQSVLVPPG…KLAIKILVHS (129 aa)). Position 4 is a phosphoserine (S4). Positions 28–61 (RIAEEKAKRPKQERKDEDDENGPKPNSDLEAGKS) are disordered. K38 is covalently cross-linked (Glycyl lysine isopeptide (Lys-Gly) (interchain with G-Cter in SUMO1)). Residues 111 to 456 (ILTPFNPIRK…QQMLEQLKKQ (346 aa)) form an I repeat. A helical membrane pass occupies residues 130 to 148 (LFNMLIMCTILTNCVFMTM). Residues 149–155 (SNPPDWT) are Extracellular-facing. Residues 156–176 (KNVEYTFTGIYTFESLIKILA) traverse the membrane as a helical segment. The Cytoplasmic segment spans residues 177–190 (RGFCLEDFTFLRDP). The chain crosses the membrane as a helical span at residues 191-208 (WNWLDFTVITFAYVTEFV). The Extracellular portion of the chain corresponds to 209-214 (DLGNVS). N212 carries N-linked (GlcNAc...) asparagine glycosylation. Residues 215 to 231 (ALRTFRVLRALKTISVI) traverse the membrane as a helical segment. At 232–250 (PGLKTIVGALIQSVKKLSD) the chain is on the cytoplasmic side. A helical transmembrane segment spans residues 251–270 (VMILTVFCLSVFALIGLQLF). The Extracellular portion of the chain corresponds to 271–369 (MGNLRNKCLQ…PNYGYTSFDT (99 aa)). A disulfide bridge links C278 with C338. N285, N291, N297, N303, N308, and N340 each carry an N-linked (GlcNAc...) asparagine glycan. The segment at residues 370-394 (FSWAFLSLFRLMTQDFWENLYQLTL) is an intramembrane region (pore-forming). Residues 395 to 401 (RAAGKTY) are Extracellular-facing. A helical membrane pass occupies residues 402 to 422 (MIFFVLVIFLGSFYLINLILA). Residues 423–759 (VVAMAYEEQN…HLVNLVVMDP (337 aa)) lie on the Cytoplasmic side of the membrane. A phosphoserine mark is found at S468, S471, S484, S526, S528, S531, S553, S554, S558, S573, S576, S589, S610, S623, S686, S687, and S721. Positions 494-529 (SSKSEKELKNRRKKKKQKEQSGEEEKNDRVRKSESE) are disordered. Residues 511-529 (KEQSGEEEKNDRVRKSESE) are compositionally biased toward basic and acidic residues. The disordered stretch occupies residues 590–610 (ENDFADDEHSTFEDNDSRRDS). The segment covering 596–610 (DEHSTFEDNDSRRDS) has biased composition (basic and acidic residues). The II repeat unit spans residues 741–1013 (CCKPWLKVKH…QIAVGRMQKG (273 aa)). The chain crosses the membrane as a helical span at residues 760–778 (FVDLAITICIVLNTLFMAM). The Extracellular portion of the chain corresponds to 779–789 (EHYPMTEQFSS). The chain crosses the membrane as a helical span at residues 790 to 809 (VLSVGNLVFTGIFTAEMFLK). At 810–823 (IIAMDPYYYFQEGW) the chain is on the cytoplasmic side. A helical membrane pass occupies residues 824–843 (NIFDGFIVSLSLMELGLANV). Over 844-845 (EG) the chain is Extracellular. A helical membrane pass occupies residues 846–863 (LSVLRSFRLLRVFKLAKS). Topologically, residues 864 to 879 (WPTLNMLIKIIGNSVG) are cytoplasmic. A helical transmembrane segment spans residues 880–898 (ALGNLTLVLAIIVFIFAVV). The Extracellular segment spans residues 899–927 (GMQLFGKSYKECVCKISNDCELPRWHMHD). C912 and C918 are disulfide-bonded. Positions 917-918 (DC) are binds SCN2B. The segment at residues 928–948 (FFHSFLIVFRVLCGEWIETMW) is an intramembrane region (pore-forming). Residues 949-961 (DCMEVAGQTMCLT) are Extracellular-facing. A disulfide bridge links C950 with C959. The helical transmembrane segment at 962–982 (VFMMVMVIGNLVVLNLFLALL) threads the bilayer. At 983–1209 (LSSFSSDNLA…TCYKIVEHNW (227 aa)) the chain is on the cytoplasmic side. The segment at 1120–1165 (EEFSSESDMEESKEKLNATSSSEGSTVDIGAPAEGEQPEVEPEESL) is disordered. Acidic residues predominate over residues 1155–1165 (EQPEVEPEESL). The III repeat unit spans residues 1190-1504 (KGKLWWNLRK…KKYYNAMKKL (315 aa)). Residues 1210–1227 (FETFIVFMILLSSGALAF) traverse the membrane as a helical segment. Residues 1228–1240 (EDIYIEQRKTIKT) are Extracellular-facing. Residues 1241–1259 (MLEYADKVFTYIFILEMLL) traverse the membrane as a helical segment. The Cytoplasmic segment spans residues 1260-1273 (KWVAYGFQVYFTNA). Residues 1274 to 1292 (WCWLDFLIVDVSLVSLTAN) form a helical membrane-spanning segment. Over 1293–1300 (ALGYSELG) the chain is Extracellular. A helical membrane pass occupies residues 1301–1319 (AIKSLRTLRALRPLRALSR). The Cytoplasmic portion of the chain corresponds to 1320–1336 (FEGMRVVVNALLGAIPS). Residues 1337-1356 (IMNVLLVCLIFWLIFSIMGV) traverse the membrane as a helical segment. Over 1357–1408 (NLFAGKFYHCINYTTGEMFDVSVVNNYSECKALIESNQTARWKNVKVNFDNV) the chain is Extracellular. An intrachain disulfide couples C1366 to C1386. N1368, N1382, and N1393 each carry an N-linked (GlcNAc...) asparagine glycan. The segment at residues 1409-1430 (GLGYLSLLQVATFKGWMDIMYA) is an intramembrane region (pore-forming). Residues 1431-1447 (AVDSRNVELQPKYEDNL) lie on the Extracellular side of the membrane. Residues 1448–1469 (YMYLYFVIFIIFGSFFTLNLFI) form a helical membrane-spanning segment. The Cytoplasmic segment spans residues 1470-1532 (GVIIDNFNQQ…MVFDFVTKQV (63 aa)). S1506 bears the Phosphoserine; by PKC mark. An IV repeat occupies 1513–1811 (IPRPANKFQG…WEKFDPDATQ (299 aa)). The chain crosses the membrane as a helical span at residues 1533–1550 (FDISIMILICLNMVTMMV). Residues 1551 to 1561 (ETDDQSQEMTN) lie on the Extracellular side of the membrane. Residues 1562–1580 (ILYWINLVFIVLFTGECVL) traverse the membrane as a helical segment. Topologically, residues 1581–1592 (KLISLRYYYFTI) are cytoplasmic. Residues 1593–1610 (GWNIFDFVVVILSIVGMF) traverse the membrane as a helical segment. Residues 1611 to 1623 (LAELIEKYFVSPT) lie on the Extracellular side of the membrane. The chain crosses the membrane as a helical span at residues 1624 to 1640 (LFRVIRLARIGRILRLI). Residues 1641–1659 (KGAKGIRTLLFALMMSLPA) lie on the Cytoplasmic side of the membrane. Residues 1660 to 1677 (LFNIGLLLFLVMFIYAIF) traverse the membrane as a helical segment. At 1678–1699 (GMSNFAYVKREVGIDDMFNFET) the chain is on the extracellular side. The pore-forming intramembrane region spans 1700-1722 (FGNSMICLFQITTSAGWDGLLAP). At 1723–1752 (ILNSGPPDCDPDKDHPGSSVKGDCGNPSVG) the chain is on the extracellular side. A disulfide bond links C1731 and C1746. Residues 1753 to 1775 (IFFFVSYIIISFLVVVNMYIAVI) traverse the membrane as a helical segment. The Cytoplasmic portion of the chain corresponds to 1776-2005 (LENFSVATEE…KGKDIRESKK (230 aa)). Residues 1905–1934 (EEVSAIIIQRAYRRYLLKQKVKKVSSIYKK) form the IQ domain. A Phosphoserine modification is found at S1930. Basic and acidic residues predominate over residues 1935–1964 (DKGKECDGTPIKEDTLIDKLNENSTPEKTD). The segment at 1935 to 2005 (DKGKECDGTP…KGKDIRESKK (71 aa)) is disordered. 3 positions are modified to phosphothreonine: T1943, T1963, and T1966. S1971 is modified (phosphoserine). The span at 1979–2005 (TKPEKEKFEKDKSEKEDKGKDIRESKK) shows a compositional bias: basic and acidic residues.

The protein belongs to the sodium channel (TC 1.A.1.10) family. Nav1.2/SCN2A subfamily. As to quaternary structure, heterooligomer of a large alpha subunit and a smaller beta subunit. Heterooligomer with SCN2B or SCN4B; disulfide-linked. Heterooligomer with SCN1B or SCN3B; non-covalently linked. Interacts with NEDD4L. Interacts with CALM. Interacts with TMEM233. Interacts with the conotoxin GVIIJ. Interacts with the spider beta/delta-theraphotoxin-Pre1a. Interacts with the conotoxin KIIIA. Interacts with the spider protoxin-II. Post-translationally, may be ubiquitinated by NEDD4L; which would promote its endocytosis. In terms of processing, phosphorylation at Ser-1506 by PKC in a highly conserved cytoplasmic loop slows inactivation of the sodium channel and reduces peak sodium currents. Sumoylated at Lys-38. Sumoylation is induced by hypoxia, increases voltage-gated sodium current and mediates the early response to acute hypoxia in neurons. Sumoylated SCN2A is located at the cell membrane.

The protein localises to the cell membrane. The catalysed reaction is Na(+)(in) = Na(+)(out). Mediates the voltage-dependent sodium ion permeability of excitable membranes. Assuming opened or closed conformations in response to the voltage difference across the membrane, the protein forms a sodium-selective channel through which Na(+) ions may pass in accordance with their electrochemical gradient. Implicated in the regulation of hippocampal replay occurring within sharp wave ripples (SPW-R) important for memory. The chain is Sodium channel protein type 2 subunit alpha from Homo sapiens (Human).